Here is a 506-residue protein sequence, read N- to C-terminus: PHD finger protein 10 (506 aa).

Disordered regions lie at residues 1–66 (MAAV…QDFG) and 293–377 (DPEL…SVSG). Residues 23-35 (VKEDNSNDTKDPE) are compositionally biased toward basic and acidic residues. The segment covering 52 to 66 (GDSTPSCENSNQDFG) has biased composition (polar residues). The interval 90–299 (MLQEQVSEYL…DPLDPELLAL (210 aa)) is SAY. Residues 326-338 (SIDSSSMNMSESD) are compositionally biased toward low complexity. Residues 353–367 (KVKEKSSTPRKEGSK) are compositionally biased toward basic and acidic residues. The PHD-type 1; degenerate zinc-finger motif lies at 387 to 444 (ICGICLKGKDANKKGRSERLIHCSQCDNSGHPSCLDMSAELVAVIKKYPWQCMECKTC). The PHD-type 2; degenerate zinc-finger motif lies at 446–489 (ICGQPHHEEEMMFCDTCDRGYHTFCVGLGALPSGRWICDCCQKV).

The protein belongs to the SAYP family. As to quaternary structure, component of neural progenitors-specific chromatin remodeling complex (npBAF complex), a subfamily of ATP-dependent SWI/SNF chromatin remodeling complexes.

It is found in the nucleus. In terms of biological role, involved in transcription activity regulation by chromatin remodeling in the context of the neural progenitors-specific chromatin remodeling complex (npBAF complex). May play a role in the proliferation of neural progenitors. The chain is PHD finger protein 10 (phf10) from Xenopus laevis (African clawed frog).